The chain runs to 349 residues: Phosphoribosylformylglycinamidine cyclo-ligase (349 aa).

This sequence belongs to the AIR synthase family.

Its subcellular location is the cytoplasm. The enzyme catalyses 2-formamido-N(1)-(5-O-phospho-beta-D-ribosyl)acetamidine + ATP = 5-amino-1-(5-phospho-beta-D-ribosyl)imidazole + ADP + phosphate + H(+). It functions in the pathway purine metabolism; IMP biosynthesis via de novo pathway; 5-amino-1-(5-phospho-D-ribosyl)imidazole from N(2)-formyl-N(1)-(5-phospho-D-ribosyl)glycinamide: step 2/2. In Jannaschia sp. (strain CCS1), this protein is Phosphoribosylformylglycinamidine cyclo-ligase.